The chain runs to 328 residues: MAKPAKRVAVTGAAGQIAYSLLFRIANGDLLGKDQPVILQLLDLPQAQAAVKGVVMELDDCAFPLLAGVVITDDPKVAFKDADVALLVGARPRSKGMERKDLLSANAEIFTVQGAALNEVASRDVKVLVVGNPANTNAYIAMKSAPDLPKKNFTAMLRLDHNRALSQLAAKSGKPVASIEKLAVWGNHSPTMYPDFRFATAEGESLLKLINDDEWNRNTFIPTVGKRGAAIIEARGLSSAASAANAAIDHVRDWVLGTNGKWVTMGIPSDGSYGIPEDIIYGVPVTCENGEYKRVEGLEIDAFSREKMDATLAELLEERDGVAHLLKN.

Residue 12–18 coordinates NAD(+); the sequence is GAAGQIA. Positions 93 and 99 each coordinate substrate. Residues Asn106, Gln113, and 130–132 contribute to the NAD(+) site; that span reads VGN. The substrate site is built by Asn132 and Arg163. The active-site Proton acceptor is the His188.

This sequence belongs to the LDH/MDH superfamily. MDH type 2 family.

The catalysed reaction is (S)-malate + NAD(+) = oxaloacetate + NADH + H(+). In terms of biological role, catalyzes the reversible oxidation of malate to oxaloacetate. The sequence is that of Malate dehydrogenase from Burkholderia multivorans (strain ATCC 17616 / 249).